The chain runs to 369 residues: 4-hydroxy-3-methylbut-2-en-1-yl diphosphate synthase (flavodoxin) (369 aa).

Residues Cys268, Cys271, Cys303, and Glu310 each contribute to the [4Fe-4S] cluster site.

Belongs to the IspG family. Requires [4Fe-4S] cluster as cofactor.

The enzyme catalyses (2E)-4-hydroxy-3-methylbut-2-enyl diphosphate + oxidized [flavodoxin] + H2O + 2 H(+) = 2-C-methyl-D-erythritol 2,4-cyclic diphosphate + reduced [flavodoxin]. It functions in the pathway isoprenoid biosynthesis; isopentenyl diphosphate biosynthesis via DXP pathway; isopentenyl diphosphate from 1-deoxy-D-xylulose 5-phosphate: step 5/6. In terms of biological role, converts 2C-methyl-D-erythritol 2,4-cyclodiphosphate (ME-2,4cPP) into 1-hydroxy-2-methyl-2-(E)-butenyl 4-diphosphate. This chain is 4-hydroxy-3-methylbut-2-en-1-yl diphosphate synthase (flavodoxin), found in Exiguobacterium sibiricum (strain DSM 17290 / CCUG 55495 / CIP 109462 / JCM 13490 / 255-15).